Consider the following 477-residue polypeptide: uncharacterized protein (477 aa).

The N-terminal stretch at 1-18 (MWTALVLVWISSVPLSRS) is a signal peptide. The Extracellular segment spans residues 19–427 (HTVPAVPRHL…DPLTPSLVNK (409 aa)). Residues N40, N51, and N77 are each glycosylated (N-linked (GlcNAc...) asparagine). 3 disordered regions span residues 79–103 (TRVTAETTPHGTNTSTPTTREGTAD), 239–366 (GTIN…TGGP), and 378–398 (KATAGTASAGPTSRSSGDVKV). A compositionally biased stretch (low complexity) spans 85–97 (TTPHGTNTSTPTT). Composition is skewed to polar residues over residues 253-288 (PAKSTPTNTSSRNPIPTSGAQTQGTTIQVTTDQPVH) and 298-309 (PSNTTLEPNTPK). N300 carries N-linked (GlcNAc...) asparagine glycosylation. Composition is skewed to low complexity over residues 310–326 (SVASTSSAVVTTTQVQT), 348–361 (TSPTTQPSPLLPTQ), and 378–393 (KATAGTASAGPTSRSS). A helical transmembrane segment spans residues 428-448 (MFLLVVLIVGVTLFIAVLMMF). The Cytoplasmic segment spans residues 449 to 477 (ALQAYESYKKKDYTQVDYLINGMYADSEM).

Its subcellular location is the cell membrane. It localises to the golgi apparatus. It is found in the trans-Golgi network membrane. This is an uncharacterized protein from Rattus norvegicus (Rat).